A 671-amino-acid polypeptide reads, in one-letter code: Probable potassium transport system protein Kup 2 (671 aa).

12 consecutive transmembrane segments (helical) span residues 18–38, 60–80, 103–123, 149–169, 173–193, 218–238, 252–272, 292–312, 343–363, 373–393, 402–422, and 424–444; these read GFLI…LYAM, VSLV…LIAL, WLIV…ALTP, VTTL…ASLV, FGPI…INSF, AGFF…ALYS, WPFV…WLLA, MVIY…QALI, LYIP…VLYF, YSLA…YFLI, IAFI…ASLV, and FING…VMFI.

It belongs to the HAK/KUP transporter (TC 2.A.72) family.

The protein resides in the cell membrane. It catalyses the reaction K(+)(in) + H(+)(in) = K(+)(out) + H(+)(out). Transport of potassium into the cell. Likely operates as a K(+):H(+) symporter. The protein is Probable potassium transport system protein Kup 2 of Lactococcus lactis subsp. cremoris (strain MG1363).